The primary structure comprises 564 residues: Rhodopsin kinase GRK1 (564 aa).

The segment at 1–15 (MDFGSLETVVANSAF) is interaction with RCVRN. The segment at 1-189 (MDFGSLETVV…LEAQPIGEDW (189 aa)) is N-terminal. Position 5 is a phosphoserine (Ser5). At Thr8 the chain carries Phosphothreonine. Ser21 is subject to Phosphoserine; by PKA and autocatalysis. Positions 58–175 (FDNLCSEQPI…LGSLYFLRFL (118 aa)) constitute an RGS domain. Residues 190-455 (FLDFRVLGKG…CDALRANVLF (266 aa)) enclose the Protein kinase domain. Residues 196–204 (LGKGGFGEV) and Lys219 contribute to the ATP site. The active-site Proton acceptor is the Asp317. The 66-residue stretch at 456-521 (KDISWRQLEA…GNCSIPWQEE (66 aa)) folds into the AGC-kinase C-terminal domain. The interval 456-564 (KDISWRQLEA…TAKSGMCLIS (109 aa)) is C-terminal. Ser491 is modified (phosphoserine; by autocatalysis). The residue at position 492 (Thr492) is a Phosphothreonine; by autocatalysis. Cys561 is modified (cysteine methyl ester). Cys561 is lipidated: S-farnesyl cysteine. The propeptide at 562–564 (LIS) is removed in mature form.

Belongs to the protein kinase superfamily. AGC Ser/Thr protein kinase family. GPRK subfamily. In terms of assembly, interacts (via N-terminus) with RCVRN (via C-terminus); the interaction is Ca(2+)-dependent. Interacts (when prenylated) with PDE6D; this promotes release from membranes. May form a complex composed of RHO, GRK1 and RCVRN in a Ca(2+)-dependent manner; RCVRN prevents the interaction between GRK1 and RHO. Autophosphorylated, Ser-21 is a minor site of autophosphorylation compared to Ser-491 and Thr-492. Phosphorylation at Ser-21 is regulated by light and activated by cAMP. Post-translationally, farnesylation is required for full activity. As to expression, detected in retina (at protein level). Retina-specific. Expressed in rod and cone photoreceptor cells.

The protein localises to the membrane. The protein resides in the cell projection. It localises to the cilium. It is found in the photoreceptor outer segment. It catalyses the reaction L-threonyl-[rhodopsin] + ATP = O-phospho-L-threonyl-[rhodopsin] + ADP + H(+). The enzyme catalyses L-seryl-[rhodopsin] + ATP = O-phospho-L-seryl-[rhodopsin] + ADP + H(+). Inhibited by RCVRN, which prevents the interaction between GRK1 and RHO. Inhibition is calcium-dependent. Functionally, retina-specific kinase involved in the signal turnoff via phosphorylation of rhodopsin (RHO), the G protein- coupled receptor that initiates the phototransduction cascade. This rapid desensitization is essential for scotopic vision and permits rapid adaptation to changes in illumination. May play a role in the maintenance of the outer nuclear layer in the retina. This chain is Rhodopsin kinase GRK1, found in Rattus norvegicus (Rat).